Reading from the N-terminus, the 287-residue chain is MRQIAFYGKGGIGKSTTQQNTMAAMAEMGRRVMIVGCDPKADSTRLILHSKAQTSVIKLAAEKGSVEDLELNEVLVEGQWGIKCVESGGPEPGVGCAGRGVITSITYLEEAGAYENLDFVTYDVLGDVVCGGFAMPIRQGKAQEIYIVTSGEMMAMYAANNIARGVLKYGHSGGVRLGGLICNSRNTDREDELIIELARRLNTQMIHFIPRNNVVQHAEVRRMTVIEYDPQNSQANEYRQLAKKIDNNEMKTIPTPIRMDELEELLIEFGIMEQEDESIIAKANATS.

Glycine 8–serine 15 is a binding site for ATP. Cysteine 96 contacts [4Fe-4S] cluster. Arginine 99 bears the ADP-ribosylarginine; by dinitrogenase reductase ADP-ribosyltransferase mark. Cysteine 130 contributes to the [4Fe-4S] cluster binding site.

Belongs to the NifH/BchL/ChlL family. In terms of assembly, homodimer. It depends on [4Fe-4S] cluster as a cofactor. In terms of processing, the reversible ADP-ribosylation of Arg-99 inactivates the nitrogenase reductase and regulates nitrogenase activity.

It carries out the reaction N2 + 8 reduced [2Fe-2S]-[ferredoxin] + 16 ATP + 16 H2O = H2 + 8 oxidized [2Fe-2S]-[ferredoxin] + 2 NH4(+) + 16 ADP + 16 phosphate + 6 H(+). The key enzymatic reactions in nitrogen fixation are catalyzed by the nitrogenase complex, which has 2 components: the iron protein and the molybdenum-iron protein. This Frankia sp. (strain EuIK1) protein is Nitrogenase iron protein (nifH).